A 370-amino-acid polypeptide reads, in one-letter code: 3-dehydroquinate synthase (370 aa).

NAD(+)-binding positions include 108–112 (GVIGD), 132–133 (TT), lysine 145, and lysine 154. Residues glutamate 187, histidine 249, and histidine 267 each contribute to the Zn(2+) site.

Belongs to the sugar phosphate cyclases superfamily. Dehydroquinate synthase family. Co(2+) is required as a cofactor. The cofactor is Zn(2+). Requires NAD(+) as cofactor.

Its subcellular location is the cytoplasm. The enzyme catalyses 7-phospho-2-dehydro-3-deoxy-D-arabino-heptonate = 3-dehydroquinate + phosphate. Its pathway is metabolic intermediate biosynthesis; chorismate biosynthesis; chorismate from D-erythrose 4-phosphate and phosphoenolpyruvate: step 2/7. Catalyzes the conversion of 3-deoxy-D-arabino-heptulosonate 7-phosphate (DAHP) to dehydroquinate (DHQ). The protein is 3-dehydroquinate synthase of Cereibacter sphaeroides (strain ATCC 17029 / ATH 2.4.9) (Rhodobacter sphaeroides).